An 84-amino-acid polypeptide reads, in one-letter code: MNKDDIIKEFQIHDTDTGSTAVQIALLTARIRHLTEHLKNHPKDFHSRRGLMKMVGRRRKMLKYLMKKDPELYKQLLEKLSLRK.

This sequence belongs to the universal ribosomal protein uS15 family. In terms of assembly, part of the 30S ribosomal subunit. Forms a bridge to the 50S subunit in the 70S ribosome, contacting the 23S rRNA.

In terms of biological role, one of the primary rRNA binding proteins, it binds directly to 16S rRNA where it helps nucleate assembly of the platform of the 30S subunit by binding and bridging several RNA helices of the 16S rRNA. Forms an intersubunit bridge (bridge B4) with the 23S rRNA of the 50S subunit in the ribosome. In Fervidobacterium nodosum (strain ATCC 35602 / DSM 5306 / Rt17-B1), this protein is Small ribosomal subunit protein uS15.